The following is a 269-amino-acid chain: MPELPEVEVSRMGITPHLLNQTIQSLIFRTPKLRWVIPSELKKLQGQVIRHIGRRAKYLIIETDVGSAIVHLGMSGSLRVLDADFPAGKHDHVDLKLSNGKVLRYNDPRRFGAWLYAAPGEDHDVLGNIGPEPLTNAFDGQYMFEKAQGKRVAVKQFIMDNKIVVGVGNIYASESLFRSRILPTRATMSLSAEEWQRLVSHIKQTLQTAIEQGGTTLKDFSQADGKPGYFAQELQVYGKAGEPCPECGEAIQEQKIGQRNTFYCSYCQC.

Proline 2 serves as the catalytic Schiff-base intermediate with DNA. Glutamate 3 functions as the Proton donor in the catalytic mechanism. Catalysis depends on lysine 57, which acts as the Proton donor; for beta-elimination activity. Histidine 90, arginine 109, and lysine 150 together coordinate DNA. The FPG-type zinc finger occupies 235-269; it reads QVYGKAGEPCPECGEAIQEQKIGQRNTFYCSYCQC. Arginine 259 (proton donor; for delta-elimination activity) is an active-site residue.

This sequence belongs to the FPG family. Monomer. Zn(2+) serves as cofactor.

The catalysed reaction is Hydrolysis of DNA containing ring-opened 7-methylguanine residues, releasing 2,6-diamino-4-hydroxy-5-(N-methyl)formamidopyrimidine.. It catalyses the reaction 2'-deoxyribonucleotide-(2'-deoxyribose 5'-phosphate)-2'-deoxyribonucleotide-DNA = a 3'-end 2'-deoxyribonucleotide-(2,3-dehydro-2,3-deoxyribose 5'-phosphate)-DNA + a 5'-end 5'-phospho-2'-deoxyribonucleoside-DNA + H(+). Functionally, involved in base excision repair of DNA damaged by oxidation or by mutagenic agents. Acts as a DNA glycosylase that recognizes and removes damaged bases. Has a preference for oxidized purines, such as 7,8-dihydro-8-oxoguanine (8-oxoG). Has AP (apurinic/apyrimidinic) lyase activity and introduces nicks in the DNA strand. Cleaves the DNA backbone by beta-delta elimination to generate a single-strand break at the site of the removed base with both 3'- and 5'-phosphates. This is Formamidopyrimidine-DNA glycosylase from Vibrio vulnificus (strain CMCP6).